A 379-amino-acid polypeptide reads, in one-letter code: Cytochrome bd-I ubiquinol oxidase subunit 2 (379 aa).

Met1 is modified (N-formylmethionine). Residues 1–8 (MIDYEVLR) are Cytoplasmic-facing. The chain crosses the membrane as a helical span at residues 9-28 (FIWWLLVGVLLIGFAVTDGF). Residues 29–79 (DMGVGMLTRFLGRNDTERRIMINSIAPHWDGNQVWLITAGGALFAAWPMVY) lie on the Periplasmic side of the membrane. Residues 80–99 (AAAFSGFYVAMILVLASLFF) traverse the membrane as a helical segment. At 100 to 122 (RPVGFDYRSKIEETRWRNMWDWG) the chain is on the cytoplasmic side. Residues 123–142 (IFIGSFVPPLVIGVAFGNLL) traverse the membrane as a helical segment. Residues 143-164 (QGVPFNVDEYLRLYYTGNFFQL) are Periplasmic-facing. Residues 165–184 (LNPFGLLAGVVSVGMIITQG) traverse the membrane as a helical segment. Residues 185–205 (ATYLQMRTVGELHLRTRATAQ) lie on the Cytoplasmic side of the membrane. The chain crosses the membrane as a helical span at residues 206–225 (VAALVTLVCFALAGVWVMYG). At 226–262 (IDGYVVKSTMDHYAASNPLNKEVVREAGAWLVNFNNT) the chain is on the periplasmic side. The chain crosses the membrane as a helical span at residues 263 to 282 (PILWAIPALGVVLPLLTILT). The Cytoplasmic portion of the chain corresponds to 283 to 292 (ARMDKAAWAF). Residues 293–312 (VFSSLTLACIILTAGIAMFP) form a helical membrane-spanning segment. Topologically, residues 313–336 (FVMPSSTMMNASLTMWDATSSQLT) are periplasmic. Residues 337-356 (LNVMTWVAVVLVPIILLYTA) form a helical membrane-spanning segment. Residues 357–379 (WCYWKMFGRITKEDIERNTHSLY) lie on the Cytoplasmic side of the membrane.

Belongs to the cytochrome ubiquinol oxidase subunit 2 family. Heterodimer of subunits I and II. Requires heme b as cofactor. It depends on heme d cis-diol as a cofactor.

The protein localises to the cell inner membrane. The catalysed reaction is 2 a ubiquinol + O2(in) + 4 H(+)(in) = 2 a ubiquinone + 2 H2O(in) + 4 H(+)(out). It functions in the pathway energy metabolism; oxidative phosphorylation. Its function is as follows. A terminal oxidase that produces a proton motive force by the vectorial transfer of protons across the inner membrane. It is the component of the aerobic respiratory chain of E.coli that predominates when cells are grown at low aeration. Generates a proton motive force using protons and electrons from opposite sides of the membrane to generate H(2)O, transferring 1 proton/electron. The protein is Cytochrome bd-I ubiquinol oxidase subunit 2 (cydB) of Escherichia coli O157:H7.